Reading from the N-terminus, the 301-residue chain is Probable alpha-L-glutamate ligase (301 aa).

One can recognise an ATP-grasp domain in the interval 104–287 (LQLLARKGIG…VAGQLIDYIE (184 aa)). ATP contacts are provided by residues Lys-141, 178 to 179 (EF), Asp-187, and 211 to 213 (RSN). Residues Asp-248, Glu-260, and Asn-262 each contribute to the Mg(2+) site. Mn(2+)-binding residues include Asp-248, Glu-260, and Asn-262.

It belongs to the RimK family. Requires Mg(2+) as cofactor. The cofactor is Mn(2+).

The protein is Probable alpha-L-glutamate ligase of Maridesulfovibrio salexigens (strain ATCC 14822 / DSM 2638 / NCIMB 8403 / VKM B-1763) (Desulfovibrio salexigens).